A 264-amino-acid polypeptide reads, in one-letter code: Small ribosomal subunit protein uS3 (264 aa).

Residues 39–107 (VREYLKKKLK…PVHVNIEEIR (69 aa)) enclose the KH type-2 domain. Residues 214-264 (PVETAAPREEERRPRRAPRGDRPDGARNGRPGGGRGRAPRKADAAPAPEGE) form a disordered region. Basic and acidic residues predominate over residues 219-240 (APREEERRPRRAPRGDRPDGAR).

Belongs to the universal ribosomal protein uS3 family. In terms of assembly, part of the 30S ribosomal subunit. Forms a tight complex with proteins S10 and S14.

Its function is as follows. Binds the lower part of the 30S subunit head. Binds mRNA in the 70S ribosome, positioning it for translation. This is Small ribosomal subunit protein uS3 from Bordetella avium (strain 197N).